Reading from the N-terminus, the 408-residue chain is LL-diaminopimelate aminotransferase (408 aa).

Substrate contacts are provided by Tyr15 and Gly42. Pyridoxal 5'-phosphate-binding positions include Tyr72, 108–109 (SK), Tyr132, Asn187, Tyr218, and 246–248 (SFS). 3 residues coordinate substrate: Lys109, Tyr132, and Asn187. Position 249 is an N6-(pyridoxal phosphate)lysine (Lys249). Pyridoxal 5'-phosphate-binding residues include Arg257 and Asn292. The substrate site is built by Asn292 and Arg388.

Belongs to the class-I pyridoxal-phosphate-dependent aminotransferase family. LL-diaminopimelate aminotransferase subfamily. Homodimer. It depends on pyridoxal 5'-phosphate as a cofactor.

It carries out the reaction (2S,6S)-2,6-diaminopimelate + 2-oxoglutarate = (S)-2,3,4,5-tetrahydrodipicolinate + L-glutamate + H2O + H(+). Its pathway is amino-acid biosynthesis; L-lysine biosynthesis via DAP pathway; LL-2,6-diaminopimelate from (S)-tetrahydrodipicolinate (aminotransferase route): step 1/1. In terms of biological role, involved in the synthesis of meso-diaminopimelate (m-DAP or DL-DAP), required for both lysine and peptidoglycan biosynthesis. Catalyzes the direct conversion of tetrahydrodipicolinate to LL-diaminopimelate. The protein is LL-diaminopimelate aminotransferase of Synechococcus sp. (strain RCC307).